A 760-amino-acid chain; its full sequence is Prolyl endopeptidase FAP (760 aa).

Residues 1 to 4 are Cytoplasmic-facing; the sequence is MKTW. The chain crosses the membrane as a helical; Signal-anchor for type II membrane protein span at residues 5 to 25; the sequence is LKIVFGVATSAVLALLVMCIV. At 26–760 the chain is on the extracellular side; it reads LRPSRVHNSE…FLKQCFSLSD (735 aa). Asn49, Asn92, and Asn99 each carry an N-linked (GlcNAc...) asparagine glycan. Residues Glu203 and Glu204 each contribute to the substrate site. N-linked (GlcNAc...) asparagine glycans are attached at residues Asn227 and Asn314. Intrachain disulfides connect Cys321–Cys332, Cys438–Cys441, and Cys448–Cys466. A coiled-coil region spans residues 481 to 512; that stretch reads TDQEIKILEDNKELENALKNIQLPKEEIKKLK. The Charge relay system role is filled by Ser624. Cys643 and Cys755 are joined by a disulfide. Asn679 carries N-linked (GlcNAc...) asparagine glycosylation. Residues Asp702 and His734 each act as charge relay system in the active site.

This sequence belongs to the peptidase S9B family. In terms of assembly, homodimer; homodimerization is required for activity of both plasma membrane and soluble forms. The monomer is inactive. Heterodimer with DPP4. Interacts with PLAUR; the interaction occurs at the cell surface of invadopodia membranes. Interacts with ITGB1. Interacts with ITGA3. Associates with integrin alpha-3/beta-1; the association occurs in a collagen-dependent manner at the cell surface of invadopodia membranes. N-glycosylated. In terms of processing, the N-terminus may be blocked.

Its subcellular location is the cell surface. It is found in the cell membrane. The protein localises to the cell projection. The protein resides in the lamellipodium membrane. It localises to the invadopodium membrane. Its subcellular location is the ruffle membrane. It is found in the membrane. The protein localises to the secreted. The catalysed reaction is Release of an N-terminal dipeptide, Xaa-Yaa-|-Zaa-, from a polypeptide, preferentially when Yaa is Pro, provided Zaa is neither Pro nor hydroxyproline.. It carries out the reaction Hydrolysis of Pro-|-Xaa &gt;&gt; Ala-|-Xaa in oligopeptides.. Gelatinase activity is inhibited by serine-protease inhibitors, such as phenylmethylsulfonyl fluoride (PMSF), 4-(2-aminoethyl)-benzenesulfonyl fluoride hydrochloride (AEBSF), 4-amidino phenylsulfonyl fluoride (APSF) and diisopropyl fluorophosphate (DFP), N-ethylmaleimide (NEM) and phenylmethylsulfonyl fluoride (PMSF). Dipeptidyl peptidase activity is inhibited by 2,2'-azino-bis(3-ethylbenzthiazoline-6-sulfonic acid), diisopropylfluorophosphate (DFP). Prolyl endopeptidase activity is inhibited by the boronic acid peptide Ac-Gly-BoroPro, Ac-Gly-Pro-chloromethyl ketone and Thr-Ser-Gly-chloromethyl ketone. In terms of biological role, cell surface glycoprotein serine protease that participates in extracellular matrix degradation and involved in many cellular processes including tissue remodeling, fibrosis, wound healing, inflammation and tumor growth. Both plasma membrane and soluble forms exhibit post-proline cleaving endopeptidase activity, with a marked preference for Ala/Ser-Gly-Pro-Ser/Asn/Ala consensus sequences, on substrate such as alpha-2-antiplasmin SERPINF2 and SPRY2. Degrade also gelatin, heat-denatured type I collagen, but not native collagen type I and IV, vibronectin, tenascin, laminin, fibronectin, fibrin or casein. Also has dipeptidyl peptidase activity, exhibiting the ability to hydrolyze the prolyl bond two residues from the N-terminus of synthetic dipeptide substrates provided that the penultimate residue is proline, with a preference for Ala-Pro, Ile-Pro, Gly-Pro, Arg-Pro and Pro-Pro. Natural neuropeptide hormones for dipeptidyl peptidase are the neuropeptide Y (NPY), peptide YY (PYY), substance P (TAC1) and brain natriuretic peptide 32 (NPPB). The plasma membrane form, in association with either DPP4, PLAUR or integrins, is involved in the pericellular proteolysis of the extracellular matrix (ECM), and hence promotes cell adhesion, migration and invasion through the ECM. Plays a role in tissue remodeling during development and wound healing. Participates in the cell invasiveness towards the ECM in malignant melanoma cancers. Enhances tumor growth progression by increasing angiogenesis, collagen fiber degradation and apoptosis and by reducing antitumor response of the immune system. Promotes glioma cell invasion through the brain parenchyma by degrading the proteoglycan brevican. Acts as a tumor suppressor in melanocytic cells through regulation of cell proliferation and survival in a serine protease activity-independent manner. The sequence is that of Prolyl endopeptidase FAP from Bos taurus (Bovine).